The sequence spans 675 residues: Polyamine deacetylase HDAC10 (675 aa).

Asp-22 is a substrate binding site. Residues 23-26 (PACE) carry the Substrate specificity motif. A substrate-binding site is contributed by Asp-94. His-137 (proton donor/acceptor) is an active-site residue. Zn(2+) contacts are provided by Asp-174, His-176, and Asp-267. Residue Tyr-307 participates in substrate binding. The interval 362 to 399 (LAQSETNPKRPRLDATNGGPKESSEPASESNPKKTAQD) is disordered.

Belongs to the histone deacetylase family. HD type 2 subfamily.

The protein resides in the cytoplasm. The protein localises to the nucleus. The enzyme catalyses N(8)-acetylspermidine + H2O = spermidine + acetate. The catalysed reaction is N-acetylputrescine + H2O = putrescine + acetate. It carries out the reaction N-acetylcadaverine + H2O = cadaverine + acetate. Its function is as follows. Polyamine deacetylase (PDAC), which acts preferentially on N(8)-acetylspermidine, and also on acetylcadaverine and acetylputrescine. Exhibits attenuated catalytic activity toward N(1),N(8)-diacetylspermidine and very low activity, if any, toward N(1)-acetylspermidine. Has a very weak lysine deacetylase, if any. In Danio rerio (Zebrafish), this protein is Polyamine deacetylase HDAC10 (hdac10).